A 165-amino-acid chain; its full sequence is Small ribosomal subunit protein uS5 (165 aa).

Positions 13-76 (LEEKVLVVNR…DAARKNLVSI (64 aa)) constitute an S5 DRBM domain.

The protein belongs to the universal ribosomal protein uS5 family. In terms of assembly, part of the 30S ribosomal subunit. Contacts proteins S4 and S8.

Functionally, with S4 and S12 plays an important role in translational accuracy. Its function is as follows. Located at the back of the 30S subunit body where it stabilizes the conformation of the head with respect to the body. The protein is Small ribosomal subunit protein uS5 of Chlamydia muridarum (strain MoPn / Nigg).